We begin with the raw amino-acid sequence, 771 residues long: Protein translocase subunit SecA 2 (771 aa).

ATP contacts are provided by residues glutamine 91, glycine 109–threonine 113, and aspartate 496.

This sequence belongs to the SecA family. In terms of assembly, monomer and homodimer. Part of the essential Sec protein translocation apparatus which comprises SecA, SecYEG and auxiliary proteins SecDF. Other proteins may also be involved.

Its subcellular location is the cell membrane. The protein resides in the cytoplasm. It carries out the reaction ATP + H2O + cellular proteinSide 1 = ADP + phosphate + cellular proteinSide 2.. Part of the Sec protein translocase complex. Interacts with the SecYEG preprotein conducting channel. Has a central role in coupling the hydrolysis of ATP to the transfer of proteins into and across the cell membrane, serving as an ATP-driven molecular motor driving the stepwise translocation of polypeptide chains across the membrane. The chain is Protein translocase subunit SecA 2 from Corynebacterium jeikeium (strain K411).